The sequence spans 532 residues: Metal-staphylopine-binding protein CntA (532 aa).

The N-terminal stretch at 1–20 (MRKLTKMSAMLLASGLILTG) is a signal peptide. A lipid anchor (N-palmitoyl cysteine) is attached at Cys-21. The S-diacylglycerol cysteine moiety is linked to residue Cys-21. Positions 165, 418, and 448 each coordinate staphylopine.

It belongs to the bacterial solute-binding protein 5 family. The complex is composed of two ATP-binding proteins (CntD and CntF), two transmembrane proteins (CntB and CntC) and a solute-binding protein (CntA).

The protein localises to the cell membrane. With respect to regulation, nickel/cobalt import is reduced in the presence of zinc. In terms of biological role, part of the ABC transporter complex CntABCDF (Opp1) involved in the uptake of metal in complex with the metallophore staphylopine (StP). Involved in the import of divalent metals ions such as nickel, cobalt and zinc. Binds the metal via the metallophore StP, and transfers the StP-metal complex to the membrane-bound permease. Binds one molecule of StP/metal. Binds StP/Co(2+) and StP/Ni(2+) tighter than StP/Zn(2+). Plays a major role in nickel/cobalt import in zinc-depleted conditions. Contributes to virulence. Required for full urease activity in vitro. In Staphylococcus aureus (strain NCTC 8325 / PS 47), this protein is Metal-staphylopine-binding protein CntA.